We begin with the raw amino-acid sequence, 141 residues long: Protein Turandot Z (141 aa).

An N-terminal signal peptide occupies residues 1-23 (MYFAIRLSFVLAVLFCLTGNGNA).

The protein belongs to the Turandot family.

The protein localises to the secreted. In terms of biological role, a humoral factor that may play a role in stress tolerance. The chain is Protein Turandot Z from Drosophila yakuba (Fruit fly).